A 207-amino-acid polypeptide reads, in one-letter code: Large ribosomal subunit protein uL4 (207 aa).

The interval 55-75 (SAVRGGGRKPWRQKGTGRARQ) is disordered. Over residues 60-71 (GGRKPWRQKGTG) the composition is skewed to basic residues.

This sequence belongs to the universal ribosomal protein uL4 family. Part of the 50S ribosomal subunit.

One of the primary rRNA binding proteins, this protein initially binds near the 5'-end of the 23S rRNA. It is important during the early stages of 50S assembly. It makes multiple contacts with different domains of the 23S rRNA in the assembled 50S subunit and ribosome. In terms of biological role, forms part of the polypeptide exit tunnel. The chain is Large ribosomal subunit protein uL4 from Staphylococcus epidermidis (strain ATCC 35984 / DSM 28319 / BCRC 17069 / CCUG 31568 / BM 3577 / RP62A).